The following is a 293-amino-acid chain: Ribosomal RNA small subunit methyltransferase A (293 aa).

Residues Asn38, Val40, Gly65, Glu86, Asp116, and Asn133 each contribute to the S-adenosyl-L-methionine site.

This sequence belongs to the class I-like SAM-binding methyltransferase superfamily. rRNA adenine N(6)-methyltransferase family. RsmA subfamily.

The protein resides in the cytoplasm. The catalysed reaction is adenosine(1518)/adenosine(1519) in 16S rRNA + 4 S-adenosyl-L-methionine = N(6)-dimethyladenosine(1518)/N(6)-dimethyladenosine(1519) in 16S rRNA + 4 S-adenosyl-L-homocysteine + 4 H(+). Its function is as follows. Specifically dimethylates two adjacent adenosines (A1518 and A1519) in the loop of a conserved hairpin near the 3'-end of 16S rRNA in the 30S particle. May play a critical role in biogenesis of 30S subunits. In Paenarthrobacter aurescens (strain TC1), this protein is Ribosomal RNA small subunit methyltransferase A.